A 478-amino-acid polypeptide reads, in one-letter code: Calcium/calmodulin-dependent protein kinase type II subunit alpha (478 aa).

A Phosphotyrosine modification is found at tyrosine 13. The region spanning 13–271 is the Protein kinase domain; it reads YQLFEELGKG…AAEALKHPWI (259 aa). ATP is bound by residues 19–27 and lysine 42; that span reads LGKGAFSVV. The active-site Proton acceptor is the aspartate 135. Phosphoserine is present on serine 257. Phosphothreonine; by autocatalysis is present on threonine 286. Positions 290–300 are calmodulin-binding; that stretch reads LKKFNARRKLK. Positions 310–320 are interaction with BAALC; sequence TRNFSGGKSGG. Residues 314–341 are disordered; the sequence is SGGKSGGNKKNDGVKESSESTNTTIEDE. A compositionally biased stretch (basic and acidic residues) spans 322–331; that stretch reads KKNDGVKESS. A phosphoserine mark is found at serine 330, serine 331, and serine 333. Phosphothreonine is present on residues threonine 336 and threonine 337. Residue serine 404 is modified to Phosphoserine.

The protein belongs to the protein kinase superfamily. CAMK Ser/Thr protein kinase family. CaMK subfamily. As to quaternary structure, there are 4 genes encoding calcium/calmodulin-dependent protein kinase type II chains: CAMK2A, CAMK2B, CAMK2G and CAMK2D. The corresponding proteins assemble into homo- or heteromultimeric holoenzymes composed of 12 subunits with two hexameric rings stacked one on top of the other. Interacts with BAALC. Interacts with MPDZ. Interacts with SYN1. Interacts with CAMK2N2. Interacts with SYNGAP1. Interacts with SYNPO2. Interacts with SHANK3. Interacts with GRIN2B. Interacts with CACNB2. Interacts with LRRC7. Interacts with GRM5. Interacts with DAGLA (via C-terminal); this interaction is enhanced by autophosphorylation of CAMK2A at Thr-286. Interacts with CAMK2N1; this interaction requires CAMK2A activation by Ca(2+). The cofactor is Mg(2+). Autophosphorylation of Thr-286 following activation by Ca(2+)/calmodulin. Phosphorylation of Thr-286 locks the kinase into an activated state. In terms of processing, palmitoylated. Probably palmitoylated by ZDHHC3 and ZDHHC7. In terms of tissue distribution, expressed in brain. Expressed in skeletal muscle.

It localises to the cytoplasm. The protein resides in the synapse. Its subcellular location is the postsynaptic density. The protein localises to the cell projection. It is found in the dendritic spine. It localises to the dendrite. It catalyses the reaction L-seryl-[protein] + ATP = O-phospho-L-seryl-[protein] + ADP + H(+). It carries out the reaction L-threonyl-[protein] + ATP = O-phospho-L-threonyl-[protein] + ADP + H(+). With respect to regulation, activated by Ca(2+)/calmodulin. Binding of calmodulin results in conformational change that relieves intrasteric autoinhibition and allows autophosphorylation of Thr-286 which turns the kinase in a constitutively active form and confers to the kinase a Ca(2+)-independent activity. Calcium/calmodulin-dependent protein kinase that functions autonomously after Ca(2+)/calmodulin-binding and autophosphorylation, and is involved in various processes, such as synaptic plasticity, neurotransmitter release and long-term potentiation. Member of the NMDAR signaling complex in excitatory synapses, it regulates NMDAR-dependent potentiation of the AMPAR and therefore excitatory synaptic transmission. Regulates dendritic spine development. Also regulates the migration of developing neurons. Phosphorylates the transcription factor FOXO3 to activate its transcriptional activity. Phosphorylates the transcription factor ETS1 in response to calcium signaling, thereby decreasing ETS1 affinity for DNA. In response to interferon-gamma (IFN-gamma) stimulation, catalyzes phosphorylation of STAT1, stimulating the JAK-STAT signaling pathway. In response to interferon-beta (IFN-beta) stimulation, stimulates the JAK-STAT signaling pathway. Acts as a negative regulator of 2-arachidonoylglycerol (2-AG)-mediated synaptic signaling via modulation of DAGLA activity. Its function is as follows. Has no kinase activity. This is Calcium/calmodulin-dependent protein kinase type II subunit alpha (Camk2a) from Mus musculus (Mouse).